The following is a 207-amino-acid chain: Protein 6b (207 aa).

Its function is as follows. Involved in tumor formation and increases auxin and cytokinin effects in host plants. This Agrobacterium vitis (Rhizobium vitis) protein is Protein 6b (6b).